Here is a 407-residue protein sequence, read N- to C-terminus: Imidazolonepropionase (407 aa).

Fe(3+) is bound by residues histidine 68 and histidine 70. Histidine 68 and histidine 70 together coordinate Zn(2+). Residues arginine 77, tyrosine 140, and histidine 173 each coordinate 4-imidazolone-5-propanoate. Residue tyrosine 140 participates in N-formimidoyl-L-glutamate binding. Histidine 238 is a binding site for Fe(3+). Histidine 238 is a Zn(2+) binding site. Glutamine 241 serves as a coordination point for 4-imidazolone-5-propanoate. Residue aspartate 313 participates in Fe(3+) binding. Position 313 (aspartate 313) interacts with Zn(2+). N-formimidoyl-L-glutamate contacts are provided by asparagine 315 and glycine 317. Threonine 318 provides a ligand contact to 4-imidazolone-5-propanoate.

Belongs to the metallo-dependent hydrolases superfamily. HutI family. The cofactor is Zn(2+). Fe(3+) serves as cofactor.

It is found in the cytoplasm. The enzyme catalyses 4-imidazolone-5-propanoate + H2O = N-formimidoyl-L-glutamate. Its pathway is amino-acid degradation; L-histidine degradation into L-glutamate; N-formimidoyl-L-glutamate from L-histidine: step 3/3. Functionally, catalyzes the hydrolytic cleavage of the carbon-nitrogen bond in imidazolone-5-propanoate to yield N-formimidoyl-L-glutamate. It is the third step in the universal histidine degradation pathway. The sequence is that of Imidazolonepropionase from Burkholderia pseudomallei (strain 1710b).